Here is a 292-residue protein sequence, read N- to C-terminus: Homoserine kinase (292 aa).

Residue 84–94 participates in ATP binding; sequence PISRGLGSSSA.

It belongs to the GHMP kinase family. Homoserine kinase subfamily.

The protein localises to the cytoplasm. The enzyme catalyses L-homoserine + ATP = O-phospho-L-homoserine + ADP + H(+). It functions in the pathway amino-acid biosynthesis; L-threonine biosynthesis; L-threonine from L-aspartate: step 4/5. In terms of biological role, catalyzes the ATP-dependent phosphorylation of L-homoserine to L-homoserine phosphate. The sequence is that of Homoserine kinase from Sulfurovum sp. (strain NBC37-1).